A 425-amino-acid polypeptide reads, in one-letter code: Serine--tRNA ligase (425 aa).

Residue Thr230–Glu232 participates in L-serine binding. Arg261–Glu263 provides a ligand contact to ATP. Glu284 contributes to the L-serine binding site. Glu348–Ser351 provides a ligand contact to ATP. Position 384 (Ser384) interacts with L-serine.

It belongs to the class-II aminoacyl-tRNA synthetase family. Type-1 seryl-tRNA synthetase subfamily. Homodimer. The tRNA molecule binds across the dimer.

It is found in the cytoplasm. It catalyses the reaction tRNA(Ser) + L-serine + ATP = L-seryl-tRNA(Ser) + AMP + diphosphate + H(+). The catalysed reaction is tRNA(Sec) + L-serine + ATP = L-seryl-tRNA(Sec) + AMP + diphosphate + H(+). It participates in aminoacyl-tRNA biosynthesis; selenocysteinyl-tRNA(Sec) biosynthesis; L-seryl-tRNA(Sec) from L-serine and tRNA(Sec): step 1/1. In terms of biological role, catalyzes the attachment of serine to tRNA(Ser). Is also able to aminoacylate tRNA(Sec) with serine, to form the misacylated tRNA L-seryl-tRNA(Sec), which will be further converted into selenocysteinyl-tRNA(Sec). The polypeptide is Serine--tRNA ligase (Maridesulfovibrio salexigens (strain ATCC 14822 / DSM 2638 / NCIMB 8403 / VKM B-1763) (Desulfovibrio salexigens)).